A 1373-amino-acid chain; its full sequence is Capping protein, Arp2/3 and myosin-I linker protein 3 (1373 aa).

Positions 126-151 are disordered; that stretch reads RGNADTPEGPRDTSPNSETSTSTTHS. The segment covering 138 to 151 has biased composition (low complexity); the sequence is TSPNSETSTSTTHS. LRR repeat units lie at residues 242–269, 272–299, 333–358, 390–417, 422–446, 453–475, 480–507, 510–536, 541–564, and 568–591; these read SGSL…VFGE, SCVL…QLLC, ASSL…ALYS, CSHL…AFKQ, AYTL…LLQG, LSDL…ALQE, VTCI…LGKN, LKHL…LVQL, DCSL…LINA, and NTCL…MLSK. 2 disordered regions span residues 864–902 and 970–1373; these read RTLS…TNID and LRHQ…PGTD. The span at 981 to 997 shows a compositional bias: pro residues; sequence PRTTPPGPGRPSVPVPG. A compositionally biased stretch (basic and acidic residues) spans 1007–1022; it reads RLDEGLEDFFSRRVMD. Residues 1047-1062 are compositionally biased toward basic residues; the sequence is QKRRRRGLFHFRRPRS. Over residues 1078–1097 the composition is skewed to pro residues; it reads LPPPPPPPPTQESPPSPDPP. A compositionally biased stretch (low complexity) spans 1098 to 1108; that stretch reads SLGNNSSPCWS. Basic and acidic residues predominate over residues 1218 to 1228; that stretch reads RRAEATWHIAE. The segment covering 1232-1243 has biased composition (polar residues); the sequence is PNHSCQSPSPAS. The span at 1269–1278 shows a compositional bias: pro residues; the sequence is PIGPRPPKPV. Positions 1345–1358 are enriched in basic and acidic residues; the sequence is QSCDKLEPDRRRPP.

It belongs to the CARMIL family. As to expression, widely expressed, with much higher levels in fetal tissues than in adult ones. Highly expressed in newborn brain.

Its subcellular location is the cytoplasm. The protein resides in the cell membrane. This is Capping protein, Arp2/3 and myosin-I linker protein 3 (Carmil3) from Rattus norvegicus (Rat).